A 294-amino-acid polypeptide reads, in one-letter code: Protoheme IX farnesyltransferase (294 aa).

Helical transmembrane passes span 19–39, 41–61, 89–109, 111–131, 138–158, 166–186, 218–238, and 272–292; these read PKQT…AGGM, LDAL…TTSV, VEAL…SYLI, PWTA…YTMW, LSII…WAAA, AIMI…YISI, VLMI…PIFL, and SPVE…RILW.

This sequence belongs to the UbiA prenyltransferase family. Protoheme IX farnesyltransferase subfamily.

The protein resides in the cell membrane. It catalyses the reaction heme b + (2E,6E)-farnesyl diphosphate + H2O = Fe(II)-heme o + diphosphate. Its pathway is porphyrin-containing compound metabolism; heme O biosynthesis; heme O from protoheme: step 1/1. Functionally, converts heme B (protoheme IX) to heme O by substitution of the vinyl group on carbon 2 of heme B porphyrin ring with a hydroxyethyl farnesyl side group. This is Protoheme IX farnesyltransferase from Korarchaeum cryptofilum (strain OPF8).